A 458-amino-acid chain; its full sequence is Divalent metal cation transporter MntH (458 aa).

A run of 11 helical transmembrane segments spans residues 38–58 (GFWK…VGYM), 76–96 (SLLS…AMAA), 119–139 (GGFL…AEII), 151–171 (MPLI…LLLM), 180–200 (AVVA…VILA), 223–243 (MLYL…LFLG), 275–295 (LTMA…LFFG), 315–335 (IVGA…LLAS), 370–390 (LMSV…EAKI), 393–413 (LLTF…IPLV), and 437–457 (FISG…LGFV).

Belongs to the NRAMP family.

It localises to the cell membrane. Functionally, h(+)-stimulated, divalent metal cation uptake system. This chain is Divalent metal cation transporter MntH, found in Lacticaseibacillus paracasei (strain ATCC 334 / BCRC 17002 / CCUG 31169 / CIP 107868 / KCTC 3260 / NRRL B-441) (Lactobacillus paracasei).